The following is a 496-amino-acid chain: MNEIAFLDLNEISLQSLSPMLSMMVFALFILIVGAIKKDLSRNFYCVFCIIAIFVNLGITLDFNGLSLSFWDMLLVDGISIISQIIILIASALFIPLALSTKEYFEYKIYEYYALFLFMIAGFLFMVSSNNLLIIFLGLEISSLCLYTLIALHNKAKSVEAAIKYFAMGSLSAGFFAMAIAMFYLATNSIDIARIGVAIKDLSLNQNLIILLGCVFIASAIGFKLSLIPFHTWIPDVYEGSNAPLAGYMSIVPKVAGFIVALRIFAMLEGSGISWIKDMLYIIAVLTMSLANIMALVQKDVKRMLAFSSIAHAGVVLCALVANSHEANVALFFYWIMFLFANLGAFSMLWVARCDDVVCWDKRFKHPYEKFSGLIKILPSYAVIMGIFMIALAGIPPFSVFWGKMVLISSLIKSDYVVLSLIIMINSAIAIYYYLKLIVFMFLKEPIVKDKNIYISNVSMALKVIVGVAVAGTVFAFLFSGAILEFIEHFVFASGF.

A run of 13 helical transmembrane segments spans residues 16 to 36 (SLSP…VGAI), 46 to 66 (CVFC…FNGL), 79 to 99 (ISII…PLAL), 116 to 136 (FLFM…LIIF), 166 to 186 (FAMG…FYLA), 208 to 228 (LIIL…LSLI), 245 to 267 (LAGY…IFAM), 278 to 298 (DMLY…ALVQ), 304 to 324 (MLAF…VANS), 331 to 351 (LFFY…MLWV), 382 to 402 (AVIM…SVFW), 422 to 442 (IIMI…VFMF), and 464 to 484 (VIVG…GAIL).

Belongs to the complex I subunit 2 family. As to quaternary structure, NDH-1 is composed of 14 different subunits. Subunits NuoA, H, J, K, L, M, N constitute the membrane sector of the complex.

Its subcellular location is the cell inner membrane. The enzyme catalyses a quinone + NADH + 5 H(+)(in) = a quinol + NAD(+) + 4 H(+)(out). Functionally, NDH-1 shuttles electrons from NADH, via FMN and iron-sulfur (Fe-S) centers, to quinones in the respiratory chain. The immediate electron acceptor for the enzyme in this species is believed to be ubiquinone. Couples the redox reaction to proton translocation (for every two electrons transferred, four hydrogen ions are translocated across the cytoplasmic membrane), and thus conserves the redox energy in a proton gradient. The sequence is that of NADH-quinone oxidoreductase subunit N from Campylobacter concisus (strain 13826).